The sequence spans 636 residues: Sodium-dependent nutrient amino acid transporter 1 (636 aa).

A disordered region spans residues 1-40 (MELKTMPQNGANNGNPQGNTSNNNNTNDSSNSNSNNNNKT). The Cytoplasmic segment spans residues 1-50 (MELKTMPQNGANNGNPQGNTSNNNNTNDSSNSNSNNNNKTERTNWSNGLE). The segment covering 7 to 40 (PQNGANNGNPQGNTSNNNNTNDSSNSNSNNNNKT) has biased composition (low complexity). 3 helical membrane passes run 51–71 (FLMSCISVSVGLGNIWRFPFT), 78–98 (GAFLIPYIIVLFMIGKPMYYL), and 131–151 (TICIISYYSSLLALTLYYLAV). Asparagine 184 carries an N-linked (GlcNAc...) asparagine glycan. Helical transmembrane passes span 225–245 (PDWKLTIALFVSWIVIFLVIM), 254–274 (AAYFLALFPYVVLFTLLGRAV), 303–323 (AVVQCFFSLAVGSGPIIMFSS), 337–357 (IVTTLDTLTSLLGGITIFAIL), 397–417 (LFSALFFFMLFVLGIGSIVAL), 436–456 (VALVTSICGFLMGLVYVTPGG), 469–489 (TYVVFILAIFELVGIAWIYGV), 511–531 (CWLIFTPIMMIVIFIYSMVTI), and 547–567 (VAGWLLFAIGASQFPLWGWWY).

It belongs to the sodium:neurotransmitter symporter (SNF) (TC 2.A.22) family.

Its subcellular location is the membrane. Its function is as follows. Unusual broad substrate spectrum amino acid:sodium cotransporter that promotes absorption of the D isomers of essential amino acids. Neutral amino acids are the preferred substrates, especially methionine and phenylalanine. The sequence is that of Sodium-dependent nutrient amino acid transporter 1 from Drosophila grimshawi (Hawaiian fruit fly).